Consider the following 232-residue polypeptide: Proteasome subunit alpha type-2 (232 aa).

The protein belongs to the peptidase T1A family. The 26S proteasome consists of a 20S proteasome core and two 19S regulatory subunits. The 20S proteasome core is composed of 28 subunits that are arranged in four stacked rings, resulting in a barrel-shaped structure. The two end rings are each formed by seven alpha subunits, and the two central rings are each formed by seven beta subunits. The catalytic chamber with the active sites is on the inside of the barrel.

Its subcellular location is the cytoplasm. The protein resides in the nucleus. Functionally, the proteasome is a multicatalytic proteinase complex which is characterized by its ability to cleave peptides with Arg, Phe, Tyr, Leu, and Glu adjacent to the leaving group at neutral or slightly basic pH. The proteasome has an ATP-dependent proteolytic activity. In Dictyostelium discoideum (Social amoeba), this protein is Proteasome subunit alpha type-2 (psmA2).